The primary structure comprises 249 residues: Probable phosphatase Spea_1436 (249 aa).

Positions 8, 10, 16, 41, 74, 102, 132, 193, and 195 each coordinate Zn(2+).

The protein belongs to the PHP family. The cofactor is Zn(2+).

This is Probable phosphatase Spea_1436 from Shewanella pealeana (strain ATCC 700345 / ANG-SQ1).